Consider the following 160-residue polypeptide: Afimbrial adhesin AFA-III (160 aa).

The signal sequence occupies residues 1–21 (MKKLAIMAAASMVFAVSSAHA). Residues 22 to 75 (GFTPSGTTGTTKLTVTEECQVRVGDLTVAKTRGQLTDAAPIGPVTVQALGCNAR) form a receptor-binding region.

The protein belongs to the Dr-adhesin family.

The protein resides in the fimbrium. Functionally, hemagglutinins of uropathogenic E.coli mediate adherence to the upper urinary tract. These adhesins bind to the Dr blood group antigen and also agglutinate human erythrocytes in the presence of D-mannose (mannose-resistant hemagglutination (MRHA)). The polypeptide is Afimbrial adhesin AFA-III (afaE3) (Escherichia coli).